The sequence spans 348 residues: Dihydroorotase (348 aa).

Zn(2+) contacts are provided by histidine 14 and histidine 16. Residues 16–18 (HLR) and asparagine 42 contribute to the substrate site. Residues lysine 100, histidine 137, and histidine 175 each contribute to the Zn(2+) site. N6-carboxylysine is present on lysine 100. Histidine 137 contacts substrate. Substrate is bound at residue leucine 220. Zn(2+) is bound at residue aspartate 248. Aspartate 248 is a catalytic residue. 2 residues coordinate substrate: histidine 252 and alanine 264.

Belongs to the metallo-dependent hydrolases superfamily. DHOase family. Class II DHOase subfamily. As to quaternary structure, homodimer. Zn(2+) is required as a cofactor.

It carries out the reaction (S)-dihydroorotate + H2O = N-carbamoyl-L-aspartate + H(+). The protein operates within pyrimidine metabolism; UMP biosynthesis via de novo pathway; (S)-dihydroorotate from bicarbonate: step 3/3. Catalyzes the reversible cyclization of carbamoyl aspartate to dihydroorotate. This chain is Dihydroorotase, found in Azotobacter vinelandii (strain DJ / ATCC BAA-1303).